We begin with the raw amino-acid sequence, 176 residues long: Translation initiation factor IF-3 (176 aa).

The protein belongs to the IF-3 family. As to quaternary structure, monomer.

The protein localises to the cytoplasm. Its function is as follows. IF-3 binds to the 30S ribosomal subunit and shifts the equilibrium between 70S ribosomes and their 50S and 30S subunits in favor of the free subunits, thus enhancing the availability of 30S subunits on which protein synthesis initiation begins. In Streptococcus mutans serotype c (strain ATCC 700610 / UA159), this protein is Translation initiation factor IF-3.